Here is a 452-residue protein sequence, read N- to C-terminus: Phosphoglucosamine mutase (452 aa).

S103 acts as the Phosphoserine intermediate in catalysis. The Mg(2+) site is built by S103, D243, D245, and D247. S103 carries the phosphoserine modification.

It belongs to the phosphohexose mutase family. It depends on Mg(2+) as a cofactor. In terms of processing, activated by phosphorylation.

It carries out the reaction alpha-D-glucosamine 1-phosphate = D-glucosamine 6-phosphate. Catalyzes the conversion of glucosamine-6-phosphate to glucosamine-1-phosphate. This Exiguobacterium sp. (strain ATCC BAA-1283 / AT1b) protein is Phosphoglucosamine mutase.